The chain runs to 185 residues: Potassium-transporting ATPase KdpC subunit (185 aa).

The chain crosses the membrane as a helical span at residues 11-31; that stretch reads LALLMTLVTGALYPLAVTGIA.

The protein belongs to the KdpC family. As to quaternary structure, the system is composed of three essential subunits: KdpA, KdpB and KdpC.

It is found in the cell inner membrane. Its function is as follows. Part of the high-affinity ATP-driven potassium transport (or Kdp) system, which catalyzes the hydrolysis of ATP coupled with the electrogenic transport of potassium into the cytoplasm. This subunit acts as a catalytic chaperone that increases the ATP-binding affinity of the ATP-hydrolyzing subunit KdpB by the formation of a transient KdpB/KdpC/ATP ternary complex. In Pseudomonas putida (strain ATCC 47054 / DSM 6125 / CFBP 8728 / NCIMB 11950 / KT2440), this protein is Potassium-transporting ATPase KdpC subunit.